Consider the following 207-residue polypeptide: Coiled-coil domain-containing protein 25 (207 aa).

At 1–104 the chain is on the extracellular side; that stretch reads MVFYFTSAVV…SNLKKTADMD (104 aa). Residues 20-24 are DNA-binding; that stretch reads KDKYE. Residues 105–121 form a helical membrane-spanning segment; that stretch reads IGQIGFHRQKEVKIVAV. Residues 112-189 adopt a coiled-coil conformation; that stretch reads RQKEVKIVAV…EDLKNYTSLM (78 aa). The Cytoplasmic segment spans residues 122–207; the sequence is EKKINEIVNR…EDGYDSDDFM (86 aa). A compositionally biased stretch (basic and acidic residues) spans 140–183; sequence YPDLAAEKESRDREERNEKKAQIQEQKKKEKEEVKKKKEMEDLK. The segment at 140–207 is disordered; it reads YPDLAAEKES…EDGYDSDDFM (68 aa). Polar residues predominate over residues 184 to 198; sequence NYTSLMKSDNMTTNE. The residue at position 203 (Ser-203) is a Phosphoserine.

The protein belongs to the CCDC25 family. As to quaternary structure, interacts (via cytoplasmic region) with ILK.

It localises to the cell membrane. The protein localises to the endomembrane system. Transmembrane receptor that senses neutrophil extracellular traps (NETs) and triggers the ILK-PARVB pathway to enhance cell motility. NETs are mainly composed of DNA fibers and are released by neutrophils to bind pathogens during inflammation. Specifically binds NETs on its extracellular region, in particular the 8-OHdG-enriched DNA present in NETs, and recruits ILK, initiating the ILK-PARVB cascade to induce cytoskeleton rearrangement and directional migration of cells. The polypeptide is Coiled-coil domain-containing protein 25 (Danio rerio (Zebrafish)).